Here is a 224-residue protein sequence, read N- to C-terminus: MDCREMDLYEDYQSPFDFDAGVNKSYLYLSPSGNSSPPGSPTLQKFGLLRTDPVPEEGEDVAATISATETLSEEEQEELRRELAKVEEEIQTLSQVLAAKEKHLAEIKRKLGINSLQELKQNIAKGWQDVTATSAYKKTSETLSQAGQKASAAFSSVGSVITKKLEDVKNSPTFKSFEEKVENLKSKVGGTKPAGGDFGEVLNSAANASATTTEPLPEKTQESL.

Phosphoserine is present on residues Ser-36 and Ser-40. Residues 62–114 (AATISATETLSEEEQEELRRELAKVEEEIQTLSQVLAAKEKHLAEIKRKLGIN) adopt a coiled-coil conformation. Phosphoserine is present on Ser-176. The tract at residues 187–224 (KVGGTKPAGGDFGEVLNSAANASATTTEPLPEKTQESL) is disordered. Over residues 203–213 (NSAANASATTT) the composition is skewed to low complexity. Ser-223 carries the phosphoserine modification.

This sequence belongs to the TPD52 family. As to quaternary structure, forms a homodimer or heterodimer with other members of the family. All isoforms interact with several 14-3-3 proteins. As to expression, isoform 2 is expressed in colon, breast, prostate, pancreas and kidney tumor cell lines. Isoform 2 is expressed at high levels in kidney, prostate, brain, small intestine and pancreas, at moderate levels in placenta and colon, at low levels in lung, liver and heart, and at very low levels in spleen, thymus, peripheral mononuclear blood cells, testis and ovary.

The chain is Tumor protein D52 (TPD52) from Homo sapiens (Human).